Here is a 188-residue protein sequence, read N- to C-terminus: Putative manganese efflux pump MntP (188 aa).

6 consecutive transmembrane segments (helical) span residues 2–22 (LYIE…AVSV), 40–60 (IASV…TMGL), 66–86 (ICAF…GKMI), 107–127 (LCGL…SLAI), 133–153 (LLQA…GVYF), and 167–187 (LIGG…HLFF).

This sequence belongs to the MntP (TC 9.B.29) family.

Its subcellular location is the cell inner membrane. Probably functions as a manganese efflux pump. The protein is Putative manganese efflux pump MntP of Parabacteroides distasonis (strain ATCC 8503 / DSM 20701 / CIP 104284 / JCM 5825 / NCTC 11152).